A 296-amino-acid chain; its full sequence is Bifunctional protein FolD (296 aa).

Residues 169–171 (GRG), threonine 196, and valine 237 contribute to the NADP(+) site.

The protein belongs to the tetrahydrofolate dehydrogenase/cyclohydrolase family. Homodimer.

It catalyses the reaction (6R)-5,10-methylene-5,6,7,8-tetrahydrofolate + NADP(+) = (6R)-5,10-methenyltetrahydrofolate + NADPH. The catalysed reaction is (6R)-5,10-methenyltetrahydrofolate + H2O = (6R)-10-formyltetrahydrofolate + H(+). Its pathway is one-carbon metabolism; tetrahydrofolate interconversion. In terms of biological role, catalyzes the oxidation of 5,10-methylenetetrahydrofolate to 5,10-methenyltetrahydrofolate and then the hydrolysis of 5,10-methenyltetrahydrofolate to 10-formyltetrahydrofolate. The sequence is that of Bifunctional protein FolD from Kocuria rhizophila (strain ATCC 9341 / DSM 348 / NBRC 103217 / DC2201).